The chain runs to 372 residues: Alpha-parvin (372 aa).

Over residues 1 to 11 (MATSPQKSPSV) the composition is skewed to low complexity. Residues 1 to 45 (MATSPQKSPSVPKSPTPKSPPSRKKDDSFLGKLGGTLARRKKAKE) form a disordered region. At A2 the chain carries N-acetylalanine. Residues S8, S14, and S19 each carry the phosphoserine modification. The segment at 21–25 (PSRKK) is interaction with ARHGAP31. A phosphoserine mark is found at S28 and S62. Calponin-homology (CH) domains lie at 95–202 (QELM…QYFR) and 262–369 (NVVK…TKYR). Residues 223 to 372 (GILQSRQIQE…NLFTKYRNVE (150 aa)) form a required for interaction with TESK1 and ILK region.

Belongs to the parvin family. In terms of assembly, component of the heterotrimeric IPP (ILK-PINCH-PARVIN) complex composed of ILK, LIMS1/PINCH and PARVA; the complex binds to F-actin via the C-terminal tail of LIMS1 and the N-terminal region of PARVA, promoting F-actin filament bundling. Formation of the IPP complex is dependent on protein kinase C and precedes integrin-mediated cell adhesion and spreading. Interacts with TGFB1I1. Interacts with ARHGAP31. Interacts with the actin cytoskeleton. Interacts (via C-terminus) with TESK1 (via C-terminus); the interaction inhibits TESK1 kinase activity. Interacts with PXN/PAXILLIN (via LD motif 4). As to expression, widely expressed, with highest levels in heart, skeletal muscle, kidney and liver.

It is found in the cell junction. Its subcellular location is the focal adhesion. It localises to the cell membrane. The protein localises to the cytoplasm. The protein resides in the cytoskeleton. It is found in the myofibril. Its subcellular location is the sarcomere. It localises to the z line. Plays a role in sarcomere organization and in smooth muscle cell contraction. Required for normal development of the embryonic cardiovascular system, and for normal septation of the heart outflow tract. Plays a role in sprouting angiogenesis and is required for normal adhesion of vascular smooth muscle cells to endothelial cells during blood vessel development. Plays a role in the reorganization of the actin cytoskeleton, formation of lamellipodia and ciliogenesis. Plays a role in the establishment of cell polarity, cell adhesion, cell spreading, and directed cell migration. Within the IPP (ILK-PINCH-PARVIN) complex, binds to F-actin, promoting F-actin bundling, a process required to generate force for actin cytoskeleton reorganization and subsequent dynamic cell adhesion events such as cell spreading and migration. The protein is Alpha-parvin (PARVA) of Homo sapiens (Human).